Consider the following 473-residue polypeptide: H(+)/Cl(-) exchange transporter ClcA (473 aa).

At 1-32 the chain is on the cytoplasmic side; it reads MNTDTPTFEAQQVVRLRRGDLIRRLLQRDKTP. A helical membrane pass occupies residues 33-69; that stretch reads LAILLTAAVVGTVTGLIGVAFEKAVTWVQNLRIGALV. Topologically, residues 70–76 are periplasmic; it reads QTADYAI. Residues 77 to 100 traverse the membrane as a helical segment; sequence LVWPLAFILSALLAMVGYFLVRKF. Residues 101–108 are Cytoplasmic-facing; the sequence is APEAGGSG. Residues 106–110 carry the Selectivity filter part_1 motif; sequence GSGIP. Ser107 provides a ligand contact to chloride. An intramembrane region (helical) is located at residues 109 to 116; that stretch reads IPEIEGAL. Residues 117–123 are Cytoplasmic-facing; the sequence is EELRPVR. Residues 124–141 form a helical membrane-spanning segment; that stretch reads WWRVLPVKFVGGMGTLGA. At 142–147 the chain is on the periplasmic side; that stretch reads GMVLGR. The Selectivity filter part_2 motif lies at 146 to 150; the sequence is GREGP. The helical transmembrane segment at 148 to 166 threads the bilayer; it reads EGPTVQIGGNIGRMVLDLF. Topologically, residues 167 to 176 are cytoplasmic; the sequence is RMRSAEARHT. Intramembrane regions (helical) lie at residues 177–189 and 193–201; these read LLAT…LSAA and PLAGILFII. Topologically, residues 202–214 are cytoplasmic; it reads EEMRPQFRYNLIS. Residues 215–232 traverse the membrane as a helical segment; the sequence is IKAVFTGVIMSSIVFRIF. At 233-252 the chain is on the periplasmic side; the sequence is NGEAPIIEVGKLSNAPVNTL. A helical transmembrane segment spans residues 253-281; it reads WLYLILGMIFGCVGPLFNHLVLRTQDMFQ. The Cytoplasmic segment spans residues 282–287; sequence RFHGGE. A helical membrane pass occupies residues 288-309; it reads IKKWVLMGGAIGGLCGILGLIE. The Periplasmic segment spans residues 310–329; that stretch reads PEAAGGGFNLIPIAAAGNYS. A helical transmembrane segment spans residues 330-349; the sequence is VGLLLFIFIARVLTTLLCFS. The Cytoplasmic segment spans residues 350–354; sequence SGAPG. The Selectivity filter part_3 motif lies at 355–359; sequence GIFAP. A helical transmembrane segment spans residues 355 to 376; the sequence is GIFAPMLALGTLLGTAFGMAAA. Positions 356 and 357 each coordinate chloride. Residues 377 to 386 lie on the Periplasmic side of the membrane; that stretch reads ACFPQYHLEA. Residues 387–401 constitute an intramembrane region (helical); it reads GTFAIAGMGALLAAS. The note=Loop between two helices intramembrane region spans 402-404; it reads VRA. An intramembrane region (helical) is located at residues 405–416; that stretch reads PLTGIVLVLEMT. Residues 417–421 constitute an intramembrane region (note=Loop between two helices); that stretch reads DNYQL. The chain crosses the membrane as a helical span at residues 422-438; that stretch reads ILPMIITCLGATLLAQF. At 439 to 473 the chain is on the cytoplasmic side; the sequence is MGGKPLYSTILARTLAKQDAEQAAKSQRSVAGENT. Tyr445 lines the chloride pocket.

It belongs to the chloride channel (TC 2.A.49) family. ClcA subfamily. As to quaternary structure, homodimer.

Its subcellular location is the cell inner membrane. It carries out the reaction 2 chloride(in) + H(+)(out) = 2 chloride(out) + H(+)(in). Its function is as follows. Proton-coupled chloride transporter. Functions as antiport system and exchanges two chloride ions for 1 proton. Probably acts as an electrical shunt for an outwardly-directed proton pump that is linked to amino acid decarboxylation, as part of the extreme acid resistance (XAR) response. The protein is H(+)/Cl(-) exchange transporter ClcA of Citrobacter koseri (strain ATCC BAA-895 / CDC 4225-83 / SGSC4696).